We begin with the raw amino-acid sequence, 322 residues long: Lipoyl synthase (322 aa).

Basic and acidic residues predominate over residues 1-25 (MSQRITIDHRSAPALRHPEKAHRPD). Residues 1–29 (MSQRITIDHRSAPALRHPEKAHRPDNPIQ) form a disordered region. C61, C66, C72, C87, C91, C94, and S300 together coordinate [4Fe-4S] cluster. Positions 73–289 (WSQRHATMMI…AAAARSKGFL (217 aa)) constitute a Radical SAM core domain.

The protein belongs to the radical SAM superfamily. Lipoyl synthase family. The cofactor is [4Fe-4S] cluster.

It localises to the cytoplasm. It carries out the reaction [[Fe-S] cluster scaffold protein carrying a second [4Fe-4S](2+) cluster] + N(6)-octanoyl-L-lysyl-[protein] + 2 oxidized [2Fe-2S]-[ferredoxin] + 2 S-adenosyl-L-methionine + 4 H(+) = [[Fe-S] cluster scaffold protein] + N(6)-[(R)-dihydrolipoyl]-L-lysyl-[protein] + 4 Fe(3+) + 2 hydrogen sulfide + 2 5'-deoxyadenosine + 2 L-methionine + 2 reduced [2Fe-2S]-[ferredoxin]. Its pathway is protein modification; protein lipoylation via endogenous pathway; protein N(6)-(lipoyl)lysine from octanoyl-[acyl-carrier-protein]: step 2/2. Its function is as follows. Catalyzes the radical-mediated insertion of two sulfur atoms into the C-6 and C-8 positions of the octanoyl moiety bound to the lipoyl domains of lipoate-dependent enzymes, thereby converting the octanoylated domains into lipoylated derivatives. This Gluconobacter oxydans (strain 621H) (Gluconobacter suboxydans) protein is Lipoyl synthase.